A 130-amino-acid polypeptide reads, in one-letter code: Small ribosomal subunit protein uS9 (130 aa).

This sequence belongs to the universal ribosomal protein uS9 family.

The sequence is that of Small ribosomal subunit protein uS9 from Colwellia psychrerythraea (strain 34H / ATCC BAA-681) (Vibrio psychroerythus).